Here is a 154-residue protein sequence, read N- to C-terminus: Nuclear cap-binding protein subunit 2 (154 aa).

Residues Y10, Y33, 102 to 106 (RVDWD), 113 to 117 (RQYGR), and 123 to 124 (QV) each bind mRNA. The 79-residue stretch at 30-108 (CTLYVGNLSF…RLIRVDWDAG (79 aa)) folds into the RRM domain.

This sequence belongs to the RRM NCBP2 family. In terms of assembly, component of the nuclear cap-binding complex (CBC), a heterodimer composed of Cbp80 and Cbp20 that interacts with m7GpppG-capped RNA. Interacts with Ars2.

It is found in the nucleus. Component of the cap-binding complex (CBC), which binds co-transcriptionally to the 5' cap of pre-mRNAs and is involved in various processes such as pre-mRNA splicing and RNA-mediated gene silencing (RNAi). The CBC complex is involved in miRNA-mediated RNA interference via its interaction with Ars2 and is required for primary microRNAs (miRNAs) processing. Also involved in innate immunity via the short interfering RNAs (siRNAs) processing machinery by restricting the viral RNA production. In the CBC complex, Cbp20 recognizes and binds capped RNAs (m7GpppG-capped RNA) but requires Cbp80 to stabilize the movement of its N-terminal loop and lock the CBC into a high affinity cap-binding state with the cap structure. In Drosophila yakuba (Fruit fly), this protein is Nuclear cap-binding protein subunit 2 (Cbp20).